A 293-amino-acid polypeptide reads, in one-letter code: MSARTLDGKATAAAIKAELRERVSALRERGVVPGLGTILVGDDPGSQWYVAGKHRDCAEVGIASLRRDLPAEISQAELEAVVEQLNADPGCTGFIVQLPLPSHLDTDAVLELVDPAKDADGLHPTNLGRLVLNVNRPITTPLPCTPRGVIELMLRHGIDLAGKDVVVVGRGVTVGRSIGALLTRREVNATVTLTHTGTKSLDEHLRSADVIVAAAGVPGLVSAENVKPGAIVLDVGVSRVEDPETGKSRVAGDVAADVAGVASWISPNPGGVGPMTRALLLQNVVESAERALR.

Residues 169-171 (GRG), T196, and V237 each bind NADP(+).

Belongs to the tetrahydrofolate dehydrogenase/cyclohydrolase family. Homodimer.

It catalyses the reaction (6R)-5,10-methylene-5,6,7,8-tetrahydrofolate + NADP(+) = (6R)-5,10-methenyltetrahydrofolate + NADPH. The catalysed reaction is (6R)-5,10-methenyltetrahydrofolate + H2O = (6R)-10-formyltetrahydrofolate + H(+). Its pathway is one-carbon metabolism; tetrahydrofolate interconversion. Functionally, catalyzes the oxidation of 5,10-methylenetetrahydrofolate to 5,10-methenyltetrahydrofolate and then the hydrolysis of 5,10-methenyltetrahydrofolate to 10-formyltetrahydrofolate. The sequence is that of Bifunctional protein FolD from Leifsonia xyli subsp. xyli (strain CTCB07).